A 354-amino-acid polypeptide reads, in one-letter code: 2-methylisoborneol synthase (354 aa).

Residues 1 to 29 (MIELIGHETPVPSQQQHTGGVRGTSACTP) form a disordered region. Residues Asp-113, Asp-114, Glu-118, Asn-264, Ser-268, and Glu-272 each coordinate Mg(2+).

This sequence belongs to the terpene synthase family. 2-methylisoborneol synthase subfamily. Mg(2+) is required as a cofactor.

The enzyme catalyses (E)-2-methylgeranyl diphosphate + H2O = 2-methylisoborneol + diphosphate. In terms of biological role, catalyzes the cyclization of 2-methylgeranyl diphosphate (2-MeGPP) to 2-methylisoborneol (2-MIB), which likely involves the intermediacy of 2-methyllinalyl diphosphate. This Saccharopolyspora erythraea (strain ATCC 11635 / DSM 40517 / JCM 4748 / NBRC 13426 / NCIMB 8594 / NRRL 2338) protein is 2-methylisoborneol synthase.